A 245-amino-acid chain; its full sequence is Acetylglutamate kinase (245 aa).

Substrate-binding positions include 41 to 42 (GG), Arg-63, and Asn-156.

It belongs to the acetylglutamate kinase family. ArgB subfamily.

The protein localises to the cytoplasm. It carries out the reaction N-acetyl-L-glutamate + ATP = N-acetyl-L-glutamyl 5-phosphate + ADP. The protein operates within amino-acid biosynthesis; L-arginine biosynthesis; N(2)-acetyl-L-ornithine from L-glutamate: step 2/4. In terms of biological role, catalyzes the ATP-dependent phosphorylation of N-acetyl-L-glutamate. In Staphylococcus epidermidis (strain ATCC 35984 / DSM 28319 / BCRC 17069 / CCUG 31568 / BM 3577 / RP62A), this protein is Acetylglutamate kinase.